Consider the following 203-residue polypeptide: Guanylate kinase (203 aa).

Residues 5–183 (GVLYIISAPS…AVEELKSVVV (179 aa)) enclose the Guanylate kinase-like domain. 12 to 19 (APSGAGKT) provides a ligand contact to ATP.

Belongs to the guanylate kinase family.

The protein resides in the cytoplasm. It carries out the reaction GMP + ATP = GDP + ADP. Essential for recycling GMP and indirectly, cGMP. The sequence is that of Guanylate kinase from Geobacter metallireducens (strain ATCC 53774 / DSM 7210 / GS-15).